The primary structure comprises 472 residues: MSTSQLAKKGEAWSARFSEPMSDLVKRYTASVFFDKRLALFDIQGSLAHAAMLAKQGIIAEADRAEIERGMAQIKAEIEAGGFEWKLDLEDVHLNIEARLTALVGDAGKRLHTGRSRNDQVATDIRLWLRSEIDNIMVLLGALRAALLDLAEQNADTILPGFTHLQVAQPVTFGHHLLAYNEMFTRDAERMADCRKRVNRLPLGAAALAGTSYPIDREFVAQQLGFDGVCRNSLDAVSDRDFAIEFCAAAALVMTHVSRFSEELVLWMSPRVGFIDIADRFCTGSSIMPQKKNPDVPELARGKTGRVNGHLIGLLTLMKGQPLAYNKDNQEDKEPLFDTVDTVVDTLRIFADMVPGITVKPEAMRAAALQGYATATDLADYLVKKGLPFRDAHEAVAHAVRACDSRQCDLADLSVAELREVSGLGDKAALIGDDVHAVLTLEGSVAARDHIGGTAPAQVRAAIAEARKTLNG.

The protein belongs to the lyase 1 family. Argininosuccinate lyase subfamily.

The protein localises to the cytoplasm. The catalysed reaction is 2-(N(omega)-L-arginino)succinate = fumarate + L-arginine. It participates in amino-acid biosynthesis; L-arginine biosynthesis; L-arginine from L-ornithine and carbamoyl phosphate: step 3/3. In Cupriavidus necator (strain ATCC 17699 / DSM 428 / KCTC 22496 / NCIMB 10442 / H16 / Stanier 337) (Ralstonia eutropha), this protein is Argininosuccinate lyase.